A 181-amino-acid polypeptide reads, in one-letter code: Transmembrane protein 47 (181 aa).

A2 carries the post-translational modification N-acetylalanine. A run of 4 helical transmembrane segments spans residues 21-41 (LVGLVCIFLALCLDLGAVLSP), 83-103 (ALLLGGAAIILIAFLVGLISI), 115-135 (VAVMLFAAVVLQVCSLVLYPI), and 152-172 (GYGLAWGATIFSFGGAILYCL).

Belongs to the TMEM47 family. Interacts with CTNNB1, CTNNA1, PRKCI, PARD6B, FYB1. In terms of tissue distribution, expressed in adult brain, fetal brain, cerebellum, heart, lung, prostate and thyroid.

The protein localises to the membrane. It is found in the cell junction. The protein resides in the adherens junction. Regulates cell junction organization in epithelial cells. May play a role in the transition from adherens junction to tight junction assembly. May regulate F-actin polymerization required for tight junctional localization dynamics and affect the junctional localization of PARD6B. During podocyte differentiation may negatively regulate activity of FYN and subsequently the abundance of nephrin. The chain is Transmembrane protein 47 (TMEM47) from Homo sapiens (Human).